The primary structure comprises 392 residues: Integrin-linked kinase-associated serine/threonine phosphatase 2C (392 aa).

The residue at position 1 (M1) is an N-acetylmethionine. Positions 1-90 (MDLFGDLPEP…TSEEEKNGSE (90 aa)) are disordered. Phosphoserine is present on S13. Residues 56–70 (SGDSGSLATSISQMV) show a composition bias toward polar residues. The span at 72 to 90 (TEGKGAKRKTSEEEKNGSE) shows a compositional bias: basic and acidic residues. One can recognise a PPM-type phosphatase domain in the interval 108-390 (KGYVAERKGE…DNVTVMVVRI (283 aa)). Residues D152 and G153 each coordinate Mn(2+). An N6-acetyllysine modification is found at K210. Positions 326 and 381 each coordinate Mn(2+).

It belongs to the PP2C family. In terms of assembly, interacts with ILK. Specific association with ILK is independent of the catalytic activity of either partner. Requires Mg(2+) as cofactor. Mn(2+) is required as a cofactor. Widely expressed. Highest levels expressed in striated muscle. Much lower levels evident in various smooth muscle tissues.

The protein localises to the cytoplasm. It catalyses the reaction O-phospho-L-seryl-[protein] + H2O = L-seryl-[protein] + phosphate. It carries out the reaction O-phospho-L-threonyl-[protein] + H2O = L-threonyl-[protein] + phosphate. Its activity is regulated as follows. Inhibited rather than stimulated by magnesium. Its function is as follows. Protein phosphatase that may play a role in regulation of cell cycle progression via dephosphorylation of its substrates whose appropriate phosphorylation states might be crucial for cell proliferation. Selectively associates with integrin linked kinase (ILK), to modulate cell adhesion and growth factor signaling. Inhibits the ILK-GSK3B signaling axis and may play an important role in inhibiting oncogenic transformation. This is Integrin-linked kinase-associated serine/threonine phosphatase 2C (ILKAP) from Homo sapiens (Human).